The primary structure comprises 522 residues: Man(5)GlcNAc(2)-PP-dolichol translocation protein RFT1 (522 aa).

Helical transmembrane passes span 35–55, 75–95, 108–128, 143–165, 177–197, 322–342, 354–374, 400–420, 457–477, and 479–499; these read DVLGLVNVRLTLLYSSILFLT, LLWLSPIISTVISVVCVYLWY, VLLSFPISAIIESIAEPFSVI, FAIGQGMLICVKRIFVLAGLFMF, AQYIGAIAYLLFNFVAFYIYI, VVGVIGFVACTFGIPYSPVVI, GGALLLSLYSGYILVTAINGI, IIHLIINYVLCVYMNSAGFIV, TSIFLGVSLLATSFTYLLFAT, and PGLSYTLAHIAIGAVCLILTA.

It belongs to the RFT1 family.

The protein localises to the endoplasmic reticulum membrane. Its pathway is protein modification; protein glycosylation. Intramembrane glycolipid transporter that operates in the biosynthetic pathway of dolichol-linked oligosaccharides, the glycan precursors employed in protein asparagine (N)-glycosylation. The sequential addition of sugars to dolichol pyrophosphate produces dolichol-linked oligosaccharides containing fourteen sugars, including two GlcNAcs, nine mannoses and three glucoses. Once assembled, the oligosaccharide is transferred from the lipid to nascent proteins by oligosaccharyltransferases. The assembly of dolichol-linked oligosaccharides begins on the cytosolic side of the endoplasmic reticulum membrane and finishes in its lumen. RFT1 could mediate the translocation of the cytosolically oriented intermediate DolPP-GlcNAc2Man5, produced by ALG11, into the ER lumen where dolichol-linked oligosaccharides assembly continues. However, the intramembrane lipid transporter activity could not be confirmed in vitro. The polypeptide is Man(5)GlcNAc(2)-PP-dolichol translocation protein RFT1 (Caenorhabditis elegans).